The sequence spans 244 residues: HTH-type transcriptional regulator RdgA (244 aa).

The 54-residue stretch at 9–62 (LKTARTAQGLSQKALGDMIGVSQAAIQKIEVGKASQTTKIVELSNNLRVRPEWL) folds into the HTH cro/C1-type domain. A DNA-binding region (H-T-H motif) is located at residues 20–39 (QKALGDMIGVSQAAIQKIEV).

Functionally, regulates pectin lyase production in response to DNA damage. This Pectobacterium carotovorum subsp. carotovorum (Erwinia carotovora subsp. carotovora) protein is HTH-type transcriptional regulator RdgA (rdgA).